Reading from the N-terminus, the 215-residue chain is Adenylate kinase (215 aa).

Gly10 to Thr15 provides a ligand contact to ATP. An NMP region spans residues Ser30–Val59. Residues Thr31, Arg36, Leu57 to Val59, Gly85 to Arg88, and Gln92 contribute to the AMP site. The segment at Gly126–Asp163 is LID. Arg127 provides a ligand contact to ATP. The Zn(2+) site is built by Cys130 and Cys133. Position 136-137 (Ser136–Phe137) interacts with ATP. Zn(2+)-binding residues include Cys150 and Cys153. Residues Arg160 and Arg171 each contribute to the AMP site. Lys199 serves as a coordination point for ATP.

This sequence belongs to the adenylate kinase family. In terms of assembly, monomer.

It is found in the cytoplasm. It catalyses the reaction AMP + ATP = 2 ADP. It participates in purine metabolism; AMP biosynthesis via salvage pathway; AMP from ADP: step 1/1. In terms of biological role, catalyzes the reversible transfer of the terminal phosphate group between ATP and AMP. Plays an important role in cellular energy homeostasis and in adenine nucleotide metabolism. In Clostridium botulinum (strain Eklund 17B / Type B), this protein is Adenylate kinase.